We begin with the raw amino-acid sequence, 204 residues long: uncharacterized protein (204 aa).

This is an uncharacterized protein from Rickettsia prowazekii (strain Madrid E).